Here is a 503-residue protein sequence, read N- to C-terminus: Transmembrane prolyl 4-hydroxylase (503 aa).

A disordered region spans residues 1-49 (MAAAVATVQRPEAETVEEASNLQWPLPPEHRPSGAATRPGDSEDAPVRP). Residues 1–61 (MAAAVATVQR…KPRGICSRAY (61 aa)) lie on the Cytoplasmic side of the membrane. A helical; Signal-anchor for type II membrane protein membrane pass occupies residues 62 to 82 (FLVLMVFVHLYLGNVLALLLF). Over 83-503 (VHYSNGDEST…RAYSDARVEL (421 aa)) the chain is Lumenal. The disordered stretch occupies residues 90-110 (ESTDPGPQRREQSPQPVPTLG). 2 EF-hand domains span residues 186-221 (AMQV…GNGR) and 225-260 (PENI…DFHK). The Ca(2+) site is built by D199, N201, D203, R205, E210, D238, D240, D242, and E249. The Fe2OG dioxygenase domain maps to 310–461 (EFSEPLQVVR…KWIANNWINV (152 aa)). Positions 329 and 331 each coordinate Fe cation. N-linked (GlcNAc...) asparagine glycosylation is found at N349 and N369. E375 is a Fe cation binding site. N383 carries N-linked (GlcNAc...) asparagine glycosylation. 2-oxoglutarate is bound at residue K452.

In terms of assembly, homodimer. It depends on Fe(2+) as a cofactor. L-ascorbate is required as a cofactor. Post-translationally, glycosylated. Highest expression levels are detected in the eye and brain, especially in the retinal epithelium cells and cortical neurons. Also expressed in skeletal muscle, lung, heart, adrenal gland, kidney, prostate, thyroid and testis.

The protein localises to the endoplasmic reticulum membrane. The enzyme catalyses L-prolyl-[hypoxia-inducible factor alpha subunit] + 2-oxoglutarate + O2 = trans-4-hydroxy-L-prolyl-[hypoxia-inducible factor alpha subunit] + succinate + CO2. In terms of biological role, catalyzes the post-translational formation of 4-hydroxyproline in hypoxia-inducible factor (HIF) alpha proteins. Hydroxylates HIF1A at 'Pro-402' and 'Pro-564'. May function as a cellular oxygen sensor and, under normoxic conditions, may target HIF through the hydroxylation for proteasomal degradation via the von Hippel-Lindau ubiquitination complex. This is Transmembrane prolyl 4-hydroxylase (P4htm) from Mus musculus (Mouse).